Consider the following 162-residue polypeptide: Zinc finger protein ZAT12 (162 aa).

C2H2-type zinc fingers lie at residues 39-61 and 82-104; these read FTCK…RASH and HPCP…MRRH.

Expressed in roots, stems and flowers.

The protein localises to the nucleus. Its function is as follows. Transcriptional repressor involved in light acclimation, cold and oxidative stress responses. May regulate a collection of transcripts involved in response to high-light, cold and oxidative stress. This is Zinc finger protein ZAT12 (ZAT12) from Arabidopsis thaliana (Mouse-ear cress).